Consider the following 531-residue polypeptide: Histone-arginine methyltransferase CARMER (531 aa).

The region spanning 141 to 450 (ASQYFQFYGY…QSYDVTIDLH (310 aa)) is the SAM-dependent MTase PRMT-type domain. S-adenosyl-L-methionine is bound by residues glutamine 154, arginine 163, glycine 187, glutamate 209, glutamate 238, and threonine 266. Arginine 501 is modified (asymmetric dimethylarginine; by autocatalysis).

The protein belongs to the class I-like SAM-binding methyltransferase superfamily. Protein arginine N-methyltransferase family. As to quaternary structure, homodimer. In terms of processing, the dimethylated protein is the major form.

The protein localises to the cytoplasm. The protein resides in the nucleus. The catalysed reaction is L-arginyl-[protein] + 2 S-adenosyl-L-methionine = N(omega),N(omega)-dimethyl-L-arginyl-[protein] + 2 S-adenosyl-L-homocysteine + 2 H(+). Its function is as follows. Methylates (mono- and asymmetric dimethylation) the guanidino nitrogens of arginyl residues in proteins. May methylate histone H3 at 'Arg-17' and activate transcription via chromatin remodeling. The sequence is that of Histone-arginine methyltransferase CARMER (Art4) from Drosophila persimilis (Fruit fly).